The following is a 495-amino-acid chain: MAQVINTNSLSLLTQNNLNKSQSALGTAIERLSSGLRINSAKDDAAGQAIANRFTANIKGLTQASRNANDGISIAQTTEGALNEINNNLQRVRELAVQSANSTNSQSDLDSIQAEITQRLNEIDRVSGQTQFNGVKVLAQDNTLTIQVGANDGETIDIDLKQINSQTLGLDTLNVQQKYKVSDTAATVTGYADTTIALDNSTFKASATGLGGTDQKIDGDLKFDDTTGKYYAKVTVTGGTGKDGYYEVSVDKTNGEVTLAGGATSPLTGGLPATATEDVKNVQVANADLTEAKAALTAAGVTGTASVVKMSYTDNNGKTIDGGLAVKVGDDYYSATQNKDGSISINTTKYTADDGTSKTALNKLGGADGKTEVVSIGGKTYAASKAEGHNFKAQPDLAEAAATTTENPLQKIDAALAQVDTLRSDLGAVQNRFNSAITNLGNTVNNLTSARSRIEDSDYATEVSNMSRAQILQQAGTSVLAQANQVPQNVLSLLR.

It belongs to the bacterial flagellin family.

The protein localises to the secreted. It is found in the bacterial flagellum. Functionally, flagellin is the subunit protein which polymerizes to form the filaments of bacterial flagella. This chain is Flagellin (fliC), found in Salmonella typhimurium (strain LT2 / SGSC1412 / ATCC 700720).